Consider the following 172-residue polypeptide: Adenine phosphoribosyltransferase (172 aa).

This sequence belongs to the purine/pyrimidine phosphoribosyltransferase family. As to quaternary structure, homodimer.

The protein resides in the cytoplasm. It carries out the reaction AMP + diphosphate = 5-phospho-alpha-D-ribose 1-diphosphate + adenine. It participates in purine metabolism; AMP biosynthesis via salvage pathway; AMP from adenine: step 1/1. Catalyzes a salvage reaction resulting in the formation of AMP, that is energically less costly than de novo synthesis. The protein is Adenine phosphoribosyltransferase of Rippkaea orientalis (strain PCC 8801 / RF-1) (Cyanothece sp. (strain PCC 8801)).